We begin with the raw amino-acid sequence, 141 residues long: 6,7-dimethyl-8-ribityllumazine synthase (141 aa).

Residues F11, 42-44 (ALE), and 66-68 (VVI) each bind 5-amino-6-(D-ribitylamino)uracil. Residue 71–72 (ET) coordinates (2S)-2-hydroxy-3-oxobutyl phosphate. H74 serves as the catalytic Proton donor. N98 contributes to the 5-amino-6-(D-ribitylamino)uracil binding site. R112 contacts (2S)-2-hydroxy-3-oxobutyl phosphate.

The protein belongs to the DMRL synthase family.

The enzyme catalyses (2S)-2-hydroxy-3-oxobutyl phosphate + 5-amino-6-(D-ribitylamino)uracil = 6,7-dimethyl-8-(1-D-ribityl)lumazine + phosphate + 2 H2O + H(+). Its pathway is cofactor biosynthesis; riboflavin biosynthesis; riboflavin from 2-hydroxy-3-oxobutyl phosphate and 5-amino-6-(D-ribitylamino)uracil: step 1/2. Functionally, catalyzes the formation of 6,7-dimethyl-8-ribityllumazine by condensation of 5-amino-6-(D-ribitylamino)uracil with 3,4-dihydroxy-2-butanone 4-phosphate. This is the penultimate step in the biosynthesis of riboflavin. The sequence is that of 6,7-dimethyl-8-ribityllumazine synthase from Sphingopyxis alaskensis (strain DSM 13593 / LMG 18877 / RB2256) (Sphingomonas alaskensis).